Here is a 213-residue protein sequence, read N- to C-terminus: Uridine kinase (213 aa).

14–21 (GASASGKS) is a binding site for ATP.

Belongs to the uridine kinase family.

The protein localises to the cytoplasm. It carries out the reaction uridine + ATP = UMP + ADP + H(+). The catalysed reaction is cytidine + ATP = CMP + ADP + H(+). Its pathway is pyrimidine metabolism; CTP biosynthesis via salvage pathway; CTP from cytidine: step 1/3. It participates in pyrimidine metabolism; UMP biosynthesis via salvage pathway; UMP from uridine: step 1/1. This chain is Uridine kinase, found in Vibrio atlanticus (strain LGP32) (Vibrio splendidus (strain Mel32)).